The sequence spans 89 residues: Small ribosomal subunit protein uS15 (89 aa).

The protein belongs to the universal ribosomal protein uS15 family. Part of the 30S ribosomal subunit. Forms a bridge to the 50S subunit in the 70S ribosome, contacting the 23S rRNA.

In terms of biological role, one of the primary rRNA binding proteins, it binds directly to 16S rRNA where it helps nucleate assembly of the platform of the 30S subunit by binding and bridging several RNA helices of the 16S rRNA. Its function is as follows. Forms an intersubunit bridge (bridge B4) with the 23S rRNA of the 50S subunit in the ribosome. The chain is Small ribosomal subunit protein uS15 from Erwinia tasmaniensis (strain DSM 17950 / CFBP 7177 / CIP 109463 / NCPPB 4357 / Et1/99).